A 319-amino-acid chain; its full sequence is Ribose-phosphate pyrophosphokinase (319 aa).

ATP contacts are provided by residues Asp-40–Glu-42 and Arg-99–Gln-100. Mg(2+) contacts are provided by His-134 and Asp-174. Residue Lys-198 is part of the active site. Residues Arg-200, Asp-224, and Asp-228–Thr-232 each bind D-ribose 5-phosphate.

It belongs to the ribose-phosphate pyrophosphokinase family. Class I subfamily. Homohexamer. Mg(2+) serves as cofactor.

The protein resides in the cytoplasm. It catalyses the reaction D-ribose 5-phosphate + ATP = 5-phospho-alpha-D-ribose 1-diphosphate + AMP + H(+). The protein operates within metabolic intermediate biosynthesis; 5-phospho-alpha-D-ribose 1-diphosphate biosynthesis; 5-phospho-alpha-D-ribose 1-diphosphate from D-ribose 5-phosphate (route I): step 1/1. Functionally, involved in the biosynthesis of the central metabolite phospho-alpha-D-ribosyl-1-pyrophosphate (PRPP) via the transfer of pyrophosphoryl group from ATP to 1-hydroxyl of ribose-5-phosphate (Rib-5-P). This Xanthomonas axonopodis pv. citri (strain 306) protein is Ribose-phosphate pyrophosphokinase.